The sequence spans 353 residues: Trans-enoyl reductase RAP2 (353 aa).

Residue 46–49 (CDHK) participates in NADP(+) binding. 131-138 (TGLSTIGM) is a substrate binding site. NADP(+) contacts are provided by residues 189–192 (SPRN), Y207, and 254–255 (LE). 274-278 (GMALL) provides a ligand contact to substrate. 343–344 (VS) is a binding site for NADP(+).

Belongs to the zinc-containing alcohol dehydrogenase family. Monomer.

Its pathway is secondary metabolite biosynthesis. Trans-enoyl reductase; part of the gene cluster that mediates the biosynthesis of a tyrosine-derived cytochalasan acting as a fungal signal recognized by resistant rice plants and leads to avirulence in Pi33 resistant rice cultivars. The first step in the pathway is catalyzed by the hybrid PKS-NRPS ACE1, assisted by the enoyl reductase RAP1, that are responsible for fusion of the tyrosine precursor and the polyketide backbone. The polyketide synthase module (PKS) of ACE1 is responsible for the synthesis of the polyketide backbone and the downstream nonribosomal peptide synthetase (NRPS) amidates the carboxyl end of the polyketide with the tyrosine precursor. Because ACE1 lacks a designated enoylreductase (ER) domain, the required activity is provided the enoyl reductase RAP1. Reduction by the hydrolyase ORFZ, followed by dehydration and intra-molecular Diels-Alder cyclization by the Diels-Alderase ORF3 then yield the required isoindolone-fused macrocycle. A number of oxidative steps catalyzed by the tailoring enzymes identified within the cluster, including cytochrome P450 monooxygenases CYP1 to CYP4, the FAD-linked oxidoreductase OXR2 and the short-chain dehydrogenase/reductase OXR1, are further required to afford the final cytochalasans that confer avirulence and which have still to be identified. The monooxygenase CYP1 has been shown to be a site-selective C-18 hydroxylase whereas the function of CYP3 is the site-selective epoxidation of the C-6/C-7 olefin that is present in some intermediate compounds. Finally, SYN2 and RAP2 are not required for avirulence in Pi33 resistant rice cultivars. This chain is Trans-enoyl reductase RAP2, found in Pyricularia oryzae (strain 70-15 / ATCC MYA-4617 / FGSC 8958) (Rice blast fungus).